The chain runs to 336 residues: Cellodextrinase A (336 aa).

E141 functions as the Proton donor in the catalytic mechanism.

The protein belongs to the glycosyl hydrolase 5 (cellulase A) family.

It is found in the secreted. Functionally, crystalline cellulose degradation. This chain is Cellodextrinase A (celA), found in Ruminococcus flavefaciens.